A 727-amino-acid chain; its full sequence is Capsid protein VP1 (727 aa).

Residues 1–10 show a composition bias toward basic residues; sequence MAPPAKRARR. Disordered regions lie at residues 1–38, 95–120, and 141–184; these read MAPPAKRARRGLVPPGYKYLGPGNSLDQGEPTNPSDAA, VLTDTPDHPSTSRPTKPTKRSKPPPH, and LAPM…VGIS. A Nuclear localization signal motif is present at residues 4-13; it reads PAKRARRGLV. Positions 19–64 are phospholipase A2-like; it reads YLGPGNSLDQGEPTNPSDAAAKEHDEAYAAYLRSGKNPYLYFSPAD. A compositionally biased stretch (polar residues) spans 25–35; that stretch reads SLDQGEPTNPS. Residues 166–183 are compositionally biased toward gly residues; that stretch reads SGNGSGGGGGGGSGGVGI. Asparagine 323 contacts Mg(2+). Residues cysteine 633 and cysteine 637 are joined by a disulfide bond.

The protein belongs to the parvoviridae capsid protein family. Interacts with host TFRC.

The protein localises to the virion. Its subcellular location is the host nucleus. Capsid protein self-assembles to form an icosahedral capsid with a T=1 symmetry, about 22 nm in diameter, and consisting of 60 copies of two size variants of the capsid proteins, VP1 and VP2, which differ by the presence of an N-terminal extension in the minor protein VP1. The capsid encapsulates the genomic ssDNA. Capsid proteins are responsible for the attachment to host cell receptors. This attachment induces virion internalization predominantly through clathrin-dependent endocytosis. Binding to the host receptors also induces capsid rearrangements leading to surface exposure of VP1 N-terminus, specifically its phospholipase A2-like region and putative nuclear localization signal(s). VP1 N-terminus might serve as a lipolytic enzyme to breach the endosomal membrane during entry into host cell and might contribute to virus transport to the nucleus. This Feline panleukopenia virus (strain 193) (FPV) protein is Capsid protein VP1.